The following is a 510-amino-acid chain: Bifunctional purine biosynthesis protein PurH (510 aa).

Positions 1–145 (MTKRALLSVS…KNFAAVLPIV (145 aa)) constitute an MGS-like domain.

The protein belongs to the PurH family.

The enzyme catalyses (6R)-10-formyltetrahydrofolate + 5-amino-1-(5-phospho-beta-D-ribosyl)imidazole-4-carboxamide = 5-formamido-1-(5-phospho-D-ribosyl)imidazole-4-carboxamide + (6S)-5,6,7,8-tetrahydrofolate. The catalysed reaction is IMP + H2O = 5-formamido-1-(5-phospho-D-ribosyl)imidazole-4-carboxamide. Its pathway is purine metabolism; IMP biosynthesis via de novo pathway; 5-formamido-1-(5-phospho-D-ribosyl)imidazole-4-carboxamide from 5-amino-1-(5-phospho-D-ribosyl)imidazole-4-carboxamide (10-formyl THF route): step 1/1. It functions in the pathway purine metabolism; IMP biosynthesis via de novo pathway; IMP from 5-formamido-1-(5-phospho-D-ribosyl)imidazole-4-carboxamide: step 1/1. This Lactiplantibacillus plantarum (strain ATCC BAA-793 / NCIMB 8826 / WCFS1) (Lactobacillus plantarum) protein is Bifunctional purine biosynthesis protein PurH.